Reading from the N-terminus, the 30-residue chain is Hainantoxin F7-28.42 (30 aa).

As to expression, expressed by the venom gland.

It is found in the secreted. In Cyriopagopus hainanus (Chinese bird spider), this protein is Hainantoxin F7-28.42.